The primary structure comprises 433 residues: GPI mannosyltransferase 2 (433 aa).

9 helical membrane-spanning segments follow: residues 4 to 24 (LVKP…IISL), 109 to 129 (TAVI…FYLT), 148 to 165 (ATFT…GFFT), 172 to 194 (LSFL…IIPY), 204 to 226 (FYYT…NCIL), 247 to 267 (ALLF…RQQF), 322 to 342 (IPNF…TFYF), 354 to 374 (LIFI…VQII), and 410 to 430 (GYIY…VFFL).

It belongs to the PIGV family.

Its subcellular location is the endoplasmic reticulum membrane. It participates in glycolipid biosynthesis; glycosylphosphatidylinositol-anchor biosynthesis. In terms of biological role, mannosyltransferase involved in glycosylphosphatidylinositol-anchor biosynthesis. Transfers the second mannose to the glycosylphosphatidylinositol during GPI precursor assembly. This is GPI mannosyltransferase 2 (GPI18) from Candida glabrata (strain ATCC 2001 / BCRC 20586 / JCM 3761 / NBRC 0622 / NRRL Y-65 / CBS 138) (Yeast).